Reading from the N-terminus, the 464-residue chain is Phosphoenolpyruvate carboxylase (464 aa).

This sequence belongs to the PEPCase type 2 family. In terms of assembly, homotetramer. It depends on Mg(2+) as a cofactor.

The catalysed reaction is oxaloacetate + phosphate = phosphoenolpyruvate + hydrogencarbonate. Catalyzes the irreversible beta-carboxylation of phosphoenolpyruvate (PEP) to form oxaloacetate (OAA), a four-carbon dicarboxylic acid source for the tricarboxylic acid cycle. This is Phosphoenolpyruvate carboxylase from Thermofilum pendens (strain DSM 2475 / Hrk 5).